The sequence spans 261 residues: Cytochrome c oxidase subunit 3 (261 aa).

At methionine 1 to proline 15 the chain is on the mitochondrial matrix side. A helical transmembrane segment spans residues tryptophan 16–tryptophan 34. Topologically, residues phenylalanine 35–leucine 40 are mitochondrial intermembrane. A helical membrane pass occupies residues threonine 41 to threonine 66. The Mitochondrial matrix portion of the chain corresponds to phenylalanine 67–threonine 72. Residues proline 73–serine 105 form a helical membrane-spanning segment. Topologically, residues leucine 106–glutamate 128 are mitochondrial intermembrane. A helical membrane pass occupies residues valine 129–methionine 152. The Mitochondrial matrix portion of the chain corresponds to glutamate 153 to glutamate 155. The chain crosses the membrane as a helical span at residues arginine 156 to glutamate 183. At alanine 184–aspartate 190 the chain is on the mitochondrial intermembrane side. A helical transmembrane segment spans residues glycine 191–isoleucine 223. Over glutamine 224–histidine 232 the chain is Mitochondrial matrix. Residues phenylalanine 233–isoleucine 256 form a helical membrane-spanning segment. Over tyrosine 257–serine 261 the chain is Mitochondrial intermembrane.

The protein belongs to the cytochrome c oxidase subunit 3 family. Component of the cytochrome c oxidase (complex IV, CIV), a multisubunit enzyme composed of 14 subunits. The complex is composed of a catalytic core of 3 subunits MT-CO1, MT-CO2 and MT-CO3, encoded in the mitochondrial DNA, and 11 supernumerary subunits COX4I, COX5A, COX5B, COX6A, COX6B, COX6C, COX7A, COX7B, COX7C, COX8 and NDUFA4, which are encoded in the nuclear genome. The complex exists as a monomer or a dimer and forms supercomplexes (SCs) in the inner mitochondrial membrane with NADH-ubiquinone oxidoreductase (complex I, CI) and ubiquinol-cytochrome c oxidoreductase (cytochrome b-c1 complex, complex III, CIII), resulting in different assemblies (supercomplex SCI(1)III(2)IV(1) and megacomplex MCI(2)III(2)IV(2)).

Its subcellular location is the mitochondrion inner membrane. It carries out the reaction 4 Fe(II)-[cytochrome c] + O2 + 8 H(+)(in) = 4 Fe(III)-[cytochrome c] + 2 H2O + 4 H(+)(out). Functionally, component of the cytochrome c oxidase, the last enzyme in the mitochondrial electron transport chain which drives oxidative phosphorylation. The respiratory chain contains 3 multisubunit complexes succinate dehydrogenase (complex II, CII), ubiquinol-cytochrome c oxidoreductase (cytochrome b-c1 complex, complex III, CIII) and cytochrome c oxidase (complex IV, CIV), that cooperate to transfer electrons derived from NADH and succinate to molecular oxygen, creating an electrochemical gradient over the inner membrane that drives transmembrane transport and the ATP synthase. Cytochrome c oxidase is the component of the respiratory chain that catalyzes the reduction of oxygen to water. Electrons originating from reduced cytochrome c in the intermembrane space (IMS) are transferred via the dinuclear copper A center (CU(A)) of subunit 2 and heme A of subunit 1 to the active site in subunit 1, a binuclear center (BNC) formed by heme A3 and copper B (CU(B)). The BNC reduces molecular oxygen to 2 water molecules using 4 electrons from cytochrome c in the IMS and 4 protons from the mitochondrial matrix. This chain is Cytochrome c oxidase subunit 3 (mt-co3), found in Salmo salar (Atlantic salmon).